Consider the following 322-residue polypeptide: Sideroflexin-1 (322 aa).

Serine 2 carries the post-translational modification N-acetylserine. Residues 2 to 102 (SGELPPNINI…MSAQVPMNMT (101 aa)) lie on the Mitochondrial matrix side of the membrane. The helical transmembrane segment at 103 to 120 (ITGCMMTFYRTTPAVLFW) threads the bilayer. The Mitochondrial intermembrane segment spans residues 121–146 (QWINQSFNAVVNYTNRSGDAPLTVNE). The chain crosses the membrane as a helical span at residues 147–167 (LGTAYVSATTGAVATALGLNA). At 168–174 (LTKHVSP) the chain is on the mitochondrial matrix side. A helical transmembrane segment spans residues 175-195 (LIGRFVPFAAVAAANCINIPL). Residues 196-228 (MRQRELKVGIPVTDENGNRLGESANAAKQAITQ) lie on the Mitochondrial intermembrane side of the membrane. The chain crosses the membrane as a helical span at residues 229 to 249 (VVVSRILMAAPGMAIPPFIMN). Topologically, residues 250-266 (TLEKKAFLKRFPWMSAP) are mitochondrial matrix. Residues 267-287 (IQVGLVGFCLVFATPLCCALF) traverse the membrane as a helical segment. Over 288–322 (PQKSSMSVTSLEAELQAKIQESHPELRRVYFNKGL) the chain is Mitochondrial intermembrane.

It belongs to the sideroflexin family. As to expression, highly expressed in tissues with high one-carbon metabolism activity, such as blood, liver and kidney.

The protein resides in the mitochondrion inner membrane. The catalysed reaction is L-serine(in) = L-serine(out). It catalyses the reaction L-alanine(in) = L-alanine(out). The enzyme catalyses L-cysteine(in) = L-cysteine(out). Functionally, amino acid transporter importing serine, an essential substrate of the mitochondrial branch of the one-carbon pathway, into mitochondria. Mitochondrial serine is then converted to glycine and formate, which exits to the cytosol where it is used to generate the charged folates that serve as one-carbon donors. May also transport other amino acids including alanine and cysteine. The polypeptide is Sideroflexin-1 (Homo sapiens (Human)).